Here is a 184-residue protein sequence, read N- to C-terminus: Photosystem I assembly protein Ycf4 (184 aa).

Helical transmembrane passes span 22-42 (FGWA…GASS) and 57-77 (IVFF…LFIS).

This sequence belongs to the Ycf4 family.

It is found in the plastid. Its subcellular location is the chloroplast thylakoid membrane. Its function is as follows. Seems to be required for the assembly of the photosystem I complex. The chain is Photosystem I assembly protein Ycf4 from Acorus calamus (Sweet flag).